Here is a 413-residue protein sequence, read N- to C-terminus: Cell wall mannoprotein HSP150 (413 aa).

Positions 1–18 are cleaved as a signal peptide; that stretch reads MQYKKTLVASALAATTLA. A propeptide spanning residues 19-72 is cleaved from the precursor; it reads AYAPSEPWSTLTPTATYSGGVTDYASTFGIAVQPISTTSSASSAATTASSKAKR. 11 PIR1/2/3 repeats span residues 73–89, 97–115, 116–134, 140–158, 164–182, 188–206, 207–225, 226–244, 245–263, 264–282, and 283–300; these read AASQ…TTTA, AAAV…TKTT, AAAV…TTTL, and QAAS…TATS.

It belongs to the PIR protein family. Post-translationally, covalently linked to beta-1,3-glucan of the inner cell wall layer via an alkali-sensitive ester linkage between the gamma-carboxyl group of glutamic acids, arising from specific glutamines within the PIR1/2/3 repeats, and hydroxyl groups of glucoses of beta-1,3-glucan chains. In terms of processing, the propeptide is cleaved off in the late Golgi. While both peptides are secreted, only a fraction of the mature glycoprotein is incorporated into the cell wall. O-glycosylated. Extensively O-mannosylated.

The protein localises to the secreted. It localises to the cell wall. Component of the outer cell wall layer. Required for stability of the cell wall and for optimal growth. Required for resistance against several antifungal and cell wall-perturbing agents and for tolerance to heat shock. This is Cell wall mannoprotein HSP150 (HSP150) from Saccharomyces cerevisiae (strain ATCC 204508 / S288c) (Baker's yeast).